The chain runs to 278 residues: Shikimate dehydrogenase (NADP(+)) (278 aa).

Shikimate contacts are provided by residues 19–21 and Thr66; that span reads SRS. The Proton acceptor role is filled by Lys70. Shikimate is bound by residues Asn91 and Asp106. Residues 129–133 and Phe221 each bind NADP(+); that span reads GAGGA. Tyr223 lines the shikimate pocket. Gly242 contacts NADP(+).

This sequence belongs to the shikimate dehydrogenase family. Homodimer.

It catalyses the reaction shikimate + NADP(+) = 3-dehydroshikimate + NADPH + H(+). It functions in the pathway metabolic intermediate biosynthesis; chorismate biosynthesis; chorismate from D-erythrose 4-phosphate and phosphoenolpyruvate: step 4/7. Involved in the biosynthesis of the chorismate, which leads to the biosynthesis of aromatic amino acids. Catalyzes the reversible NADPH linked reduction of 3-dehydroshikimate (DHSA) to yield shikimate (SA). The protein is Shikimate dehydrogenase (NADP(+)) of Anaeromyxobacter dehalogenans (strain 2CP-1 / ATCC BAA-258).